The primary structure comprises 95 residues: Probable FAD-linked sulfhydryl oxidase OPG072 (95 aa).

The Intravirion portion of the chain corresponds to methionine 1–arginine 8. The region spanning methionine 1–leucine 95 is the ERV/ALR sulfhydryl oxidase domain. The chain crosses the membrane as a helical span at residues alanine 9–glycine 25. Over asparagine 26–leucine 95 the chain is Virion surface. Cysteine 43 and cysteine 46 form a disulfide bridge.

The protein belongs to the orthopoxvirus OPG072 family. In terms of assembly, interacts with OPG128/A2.5; this interaction involves formation of a transient disulfide-bonded intermediate, allowing disulfide bond transfer. FAD is required as a cofactor.

It localises to the virion membrane. It is found in the host cytoplasm. The enzyme catalyses 2 R'C(R)SH + O2 = R'C(R)S-S(R)CR' + H2O2. Its function is as follows. FAD-dependent sulfhydryl oxidase that catalyzes disulfide bond formation. The complete pathway for formation of disulfide bonds in intracellular virion membrane proteins sequentially involves thiol-disulfide transfer between OPG072/E10, OPG128/A2.5 and OPG088/G4. The protein is Probable FAD-linked sulfhydryl oxidase OPG072 (OPG072) of Bos taurus (Bovine).